A 185-amino-acid polypeptide reads, in one-letter code: Ribosome-recycling factor (185 aa).

Belongs to the RRF family.

It localises to the cytoplasm. Responsible for the release of ribosomes from messenger RNA at the termination of protein biosynthesis. May increase the efficiency of translation by recycling ribosomes from one round of translation to another. This is Ribosome-recycling factor from Campylobacter fetus subsp. fetus (strain 82-40).